The primary structure comprises 550 residues: Cytochrome P450 monooxygenase FFUJ_09176 (550 aa).

The signal sequence occupies residues 1–31; that stretch reads MLQTIPMPSRELTIALAVLSLLMVLVQRAGS. Over residues 430 to 441 the composition is skewed to basic and acidic residues; that stretch reads FIPERFEGDTRS. The interval 430-451 is disordered; the sequence is FIPERFEGDTRSSQESAASPDV. A heme-binding site is contributed by C466.

This sequence belongs to the cytochrome P450 family.

Functionally, cytochrome P450 monooxygenase; part of the DMATS1 gene cluster that mediates the biosynthesis of a reversely N-prenylated monomeric L-tryptophan (r-N-DMAT). Seems not to contribute to the final DMATS1 product. This Gibberella fujikuroi (strain CBS 195.34 / IMI 58289 / NRRL A-6831) (Bakanae and foot rot disease fungus) protein is Cytochrome P450 monooxygenase FFUJ_09176.